Consider the following 353-residue polypeptide: Nicotinate-nucleotide--dimethylbenzimidazole phosphoribosyltransferase (353 aa).

The Proton acceptor role is filled by E318.

Belongs to the CobT family.

The enzyme catalyses 5,6-dimethylbenzimidazole + nicotinate beta-D-ribonucleotide = alpha-ribazole 5'-phosphate + nicotinate + H(+). Its pathway is nucleoside biosynthesis; alpha-ribazole biosynthesis; alpha-ribazole from 5,6-dimethylbenzimidazole: step 1/2. Its function is as follows. Catalyzes the synthesis of alpha-ribazole-5'-phosphate from nicotinate mononucleotide (NAMN) and 5,6-dimethylbenzimidazole (DMB). This is Nicotinate-nucleotide--dimethylbenzimidazole phosphoribosyltransferase from Geobacter metallireducens (strain ATCC 53774 / DSM 7210 / GS-15).